The primary structure comprises 253 residues: Bridging integrator 3 (253 aa).

A BAR domain is found at 9–232 (GQPKKQIVSK…LDQPGHSDEH (224 aa)). Coiled-coil stretches lie at residues 16–57 (VSKT…AMSK) and 120–151 (SLNM…KEKT).

It is found in the cytoplasm. The protein resides in the cytoskeleton. Its function is as follows. Involved in cytokinesis and septation where it has a role in the localization of F-actin. This chain is Bridging integrator 3 (Bin3), found in Rattus norvegicus (Rat).